We begin with the raw amino-acid sequence, 134 residues long: Profilin-1 (134 aa).

A disulfide bridge connects residues cysteine 13 and cysteine 118. The short motif at 84–100 (AVIRGKKGSGGITIKKT) is the Involved in PIP2 interaction element. Threonine 114 bears the Phosphothreonine mark.

Belongs to the profilin family. Occurs in many kinds of cells as a complex with monomeric actin in a 1:1 ratio. Post-translationally, phosphorylated by MAP kinases.

It localises to the cytoplasm. The protein resides in the cytoskeleton. Its function is as follows. Binds to actin and affects the structure of the cytoskeleton. At high concentrations, profilin prevents the polymerization of actin, whereas it enhances it at low concentrations. By binding to PIP2, it inhibits the formation of IP3 and DG. The protein is Profilin-1 (PRO1) of Olea europaea (Common olive).